Consider the following 237-residue polypeptide: MKPEVFYKTLADQGIQLTDQQKHQFHRYFQLLVEWNEKINLTAITEESEVYLKHFYDSIAPLLQGHIQNEPLRLLDIGAGAGFPSLPMKIIFPQLDVTIIDSLNKRINFLHLLAEELELEGVHFYHGRAEDFAQDKNFRAQFDLVTARAVARMQILSELTIPYLKLHGKLIALKASSAEDELTQAKNALNLLFAKVIENHDYTLPNGDPRTLTIVEKKKETPNKFPRKAGMPNKRPL.

S-adenosyl-L-methionine-binding positions include Gly78, Phe83, 129-130 (AE), and Arg148. The interval 218-237 (KKETPNKFPRKAGMPNKRPL) is disordered.

It belongs to the methyltransferase superfamily. RNA methyltransferase RsmG family.

Its subcellular location is the cytoplasm. In terms of biological role, specifically methylates the N7 position of a guanine in 16S rRNA. The protein is Ribosomal RNA small subunit methyltransferase G of Streptococcus suis (strain 98HAH33).